We begin with the raw amino-acid sequence, 498 residues long: Probable malate:quinone oxidoreductase (498 aa).

Belongs to the MQO family. FAD is required as a cofactor.

The catalysed reaction is (S)-malate + a quinone = a quinol + oxaloacetate. It functions in the pathway carbohydrate metabolism; tricarboxylic acid cycle; oxaloacetate from (S)-malate (quinone route): step 1/1. The sequence is that of Probable malate:quinone oxidoreductase from Prochlorococcus marinus (strain MIT 9301).